We begin with the raw amino-acid sequence, 139 residues long: Large ribosomal subunit protein uL16 (139 aa).

Over residues 1–19 (MLIPRKVKHRKQHHPKRSG) the composition is skewed to basic residues. The tract at residues 1–22 (MLIPRKVKHRKQHHPKRSGVAK) is disordered.

The protein belongs to the universal ribosomal protein uL16 family. As to quaternary structure, part of the 50S ribosomal subunit.

Binds 23S rRNA and is also seen to make contacts with the A and possibly P site tRNAs. This Acidothermus cellulolyticus (strain ATCC 43068 / DSM 8971 / 11B) protein is Large ribosomal subunit protein uL16.